Consider the following 237-residue polypeptide: Apoptosis regulator OPG045 (237 aa).

This sequence belongs to the orthopoxvirus OPG045 family. In terms of assembly, interacts with host BAK1, BAX and BID.

The protein resides in the host mitochondrion outer membrane. The protein localises to the host cytoplasm. Functionally, plays a role in the inhibition of host apoptosis. Interacts with host BAX and thereby inhibits its activity. The polypeptide is Apoptosis regulator OPG045 (OPG045) (Homo sapiens (Human)).